Here is a 317-residue protein sequence, read N- to C-terminus: tRNA dimethylallyltransferase (317 aa).

Glycine 19 to serine 26 contacts ATP. Threonine 21–serine 26 is a binding site for substrate. Residues aspartate 44–glutamine 47 are interaction with substrate tRNA.

Belongs to the IPP transferase family. In terms of assembly, monomer. Mg(2+) is required as a cofactor.

The enzyme catalyses adenosine(37) in tRNA + dimethylallyl diphosphate = N(6)-dimethylallyladenosine(37) in tRNA + diphosphate. Catalyzes the transfer of a dimethylallyl group onto the adenine at position 37 in tRNAs that read codons beginning with uridine, leading to the formation of N6-(dimethylallyl)adenosine (i(6)A). This Methylorubrum extorquens (strain PA1) (Methylobacterium extorquens) protein is tRNA dimethylallyltransferase.